We begin with the raw amino-acid sequence, 269 residues long: Glutamate racemase (269 aa).

Residues 13 to 14 and 45 to 46 contribute to the substrate site; these read DS and YS. Cysteine 77 (proton donor/acceptor) is an active-site residue. Residue 78–79 participates in substrate binding; that stretch reads NT. Cysteine 188 (proton donor/acceptor) is an active-site residue. 189-190 is a substrate binding site; the sequence is TH.

The protein belongs to the aspartate/glutamate racemases family.

The catalysed reaction is L-glutamate = D-glutamate. Its pathway is cell wall biogenesis; peptidoglycan biosynthesis. Functionally, provides the (R)-glutamate required for cell wall biosynthesis. This is Glutamate racemase from Pasteurella multocida (strain Pm70).